Here is a 558-residue protein sequence, read N- to C-terminus: Glucose-6-phosphate isomerase (558 aa).

K12 is modified (N6-acetyllysine). Phosphoserine occurs at positions 86 and 107. N6-acetyllysine is present on K142. Residue 159-160 participates in D-glucose 6-phosphate binding; the sequence is GS. Position 185 is a phosphoserine; by CK2 (S185). 210–215 is a binding site for D-glucose 6-phosphate; that stretch reads SKTFTT. Residue T250 is modified to Phosphothreonine. D-glucose 6-phosphate contacts are provided by Q354, E358, and H389. Catalysis depends on E358, which acts as the Proton donor. H389 is a catalytic residue. The residue at position 454 (K454) is an N6-acetyllysine; alternate. At K454 the chain carries N6-malonyllysine; alternate. Residue K454 is modified to N6-succinyllysine; alternate. At S455 the chain carries Phosphoserine. Residue K519 participates in D-glucose 6-phosphate binding. K519 is an active-site residue.

This sequence belongs to the GPI family. In terms of assembly, homodimer; in the catalytically active form. Monomer in the secreted form. In terms of processing, phosphorylation at Ser-185 by CK2 has been shown to decrease enzymatic activity and may contribute to secretion by a non-classical secretory pathway. Post-translationally, ISGylated.

Its subcellular location is the cytoplasm. The protein resides in the secreted. The enzyme catalyses alpha-D-glucose 6-phosphate = beta-D-fructose 6-phosphate. The protein operates within carbohydrate degradation; glycolysis; D-glyceraldehyde 3-phosphate and glycerone phosphate from D-glucose: step 2/4. Its function is as follows. In the cytoplasm, catalyzes the conversion of glucose-6-phosphate to fructose-6-phosphate, the second step in glycolysis, and the reverse reaction during gluconeogenesis. Besides it's role as a glycolytic enzyme, also acts as a secreted cytokine: acts as an angiogenic factor (AMF) that stimulates endothelial cell motility. Acts as a neurotrophic factor, neuroleukin, for spinal and sensory neurons. It is secreted by lectin-stimulated T-cells and induces immunoglobulin secretion. The protein is Glucose-6-phosphate isomerase of Cricetulus griseus (Chinese hamster).